The chain runs to 347 residues: MRVADFHFDLPEALIARHPLPERRASRLLALDGPTGTLAHRQFADLLDYLRPGDLMVFNNTRVIPARLFGQKESGGKLEVLVERVLDQHRVLAHIRASKAPKPGTRILVEGGGSAEMLQRHDALFELAFAEPVLPLLERVGHMPLPPYIDRPDDAADRERYQTVYAQRAGAVAAPTAGLHFDEALLEAIRAKGVDTAFVTLHVGAGTFQPVRVERIEDHVMHREWLEVGQDVVDAVSACRARGGRVVAVGTTSVRSLESAARDGELKPFSGDTDIFIYPGRPFHVVDALVTNFHLPESTLLMLVSAFAGYPETMAAYAAAVAQGYRFFSYGDAMFITRNPAPRGPED.

The protein belongs to the QueA family. Monomer.

The protein localises to the cytoplasm. The enzyme catalyses 7-aminomethyl-7-carbaguanosine(34) in tRNA + S-adenosyl-L-methionine = epoxyqueuosine(34) in tRNA + adenine + L-methionine + 2 H(+). Its pathway is tRNA modification; tRNA-queuosine biosynthesis. Transfers and isomerizes the ribose moiety from AdoMet to the 7-aminomethyl group of 7-deazaguanine (preQ1-tRNA) to give epoxyqueuosine (oQ-tRNA). This chain is S-adenosylmethionine:tRNA ribosyltransferase-isomerase, found in Pseudomonas aeruginosa (strain UCBPP-PA14).